The sequence spans 336 residues: Poly(A) RNA polymerase cid12 (336 aa).

Positions 77 and 79 each coordinate Mg(2+). Positions 209-263 (ALLQKFFYFWGVEWTYELFVLRPLTGQIVPKLQKGWLNEVQPNLLSIEDPIDRNN) constitute a PAP-associated domain. Phosphoserine is present on serine 325. At threonine 327 the chain carries Phosphothreonine. Serine 329 carries the post-translational modification Phosphoserine.

This sequence belongs to the DNA polymerase type-B-like family. As to quaternary structure, cid12, hrr1 and rdp1 interact forming the RNA-directed RNA polymerase complex (RDRC). The RDRC complex interacts with the RITS complex via interaction between ago1 and hrr1. Clr4 has a role in mediating this interaction. It depends on Mg(2+) as a cofactor. The cofactor is Mn(2+).

The protein resides in the cytoplasm. It is found in the nucleus. The catalysed reaction is RNA(n) + ATP = RNA(n)-3'-adenine ribonucleotide + diphosphate. Has a role in the RNA interference (RNAi) pathway which is important for heterochromatin formation and accurate chromosome segregation. A member of the RNA-directed RNA polymerase complex (RDRC) which is involved in the generation of small interfering RNAs (siRNAs) and mediate their association with the RNA-induced transcriptional silencing (RITS) complex. RITS acts as a priming complex for dsRNA synthesis at the site of non-coding centromeric RNA. This is Poly(A) RNA polymerase cid12 (cid12) from Schizosaccharomyces pombe (strain 972 / ATCC 24843) (Fission yeast).